We begin with the raw amino-acid sequence, 500 residues long: Glycerol kinase (500 aa).

Thr13 contributes to the ADP binding site. The ATP site is built by Thr13, Thr14, and Ser15. Sn-glycerol 3-phosphate is bound at residue Thr13. Arg17 serves as a coordination point for ADP. Sn-glycerol 3-phosphate contacts are provided by Arg83, Glu84, Tyr135, and Asp245. Positions 83, 84, 135, 245, and 246 each coordinate glycerol. Thr267 and Gly310 together coordinate ADP. 4 residues coordinate ATP: Thr267, Gly310, Gln314, and Gly411. Positions 411 and 415 each coordinate ADP.

The protein belongs to the FGGY kinase family. As to quaternary structure, homotetramer and homodimer (in equilibrium).

The catalysed reaction is glycerol + ATP = sn-glycerol 3-phosphate + ADP + H(+). It participates in polyol metabolism; glycerol degradation via glycerol kinase pathway; sn-glycerol 3-phosphate from glycerol: step 1/1. Activated by phosphorylation and inhibited by fructose 1,6-bisphosphate (FBP). Functionally, key enzyme in the regulation of glycerol uptake and metabolism. Catalyzes the phosphorylation of glycerol to yield sn-glycerol 3-phosphate. The polypeptide is Glycerol kinase (Lactobacillus acidophilus (strain ATCC 700396 / NCK56 / N2 / NCFM)).